The sequence spans 84 residues: U7-ctenitoxin-Pn1a (84 aa).

The signal sequence occupies residues 1 to 17 (MKLCILLVVLLITVVRA). Residues 18-38 (EEDILENEAEDISPAIKERSA) constitute a propeptide that is removed on maturation. Disulfide bonds link cysteine 41-cysteine 56, cysteine 48-cysteine 61, cysteine 55-cysteine 78, and cysteine 63-cysteine 76.

As to expression, expressed by the venom gland.

Its subcellular location is the secreted. In terms of biological role, antagonist of L-type calcium channels (Cav1/CACNA1). Causes paralysis in the posterior limbs and gradual decreases in movement and aggression during 24 hours at dose levels of 5 ug per mouse. The sequence is that of U7-ctenitoxin-Pn1a from Phoneutria nigriventer (Brazilian armed spider).